We begin with the raw amino-acid sequence, 883 residues long: Envelope glycoprotein B (883 aa).

The N-terminal stretch at 1 to 31 is a signal peptide; it reads MQSYIAVNIDMASLKMLICVCVAILIPSTLS. Over 32–750 the chain is Virion surface; sequence QDSHGIAGII…SGIASFLSNP (719 aa). 5 cysteine pairs are disulfide-bonded: Cys-77–Cys-535, Cys-94–Cys-491, Cys-167–Cys-229, Cys-321–Cys-369, and Cys-558–Cys-608. 2 N-linked (GlcNAc...) asparagine; by host glycosylation sites follow: Asn-102 and Asn-121. The involved in fusion and/or binding to host membrane stretch occupies residues 134-140; that stretch reads TWALFSR. N-linked (GlcNAc...) asparagine; by host glycosylation is present at Asn-211. The involved in fusion and/or binding to host membrane stretch occupies residues 216 to 223; the sequence is HQTLGYRT. N-linked (GlcNAc...) asparagine; by host glycosylation is found at Asn-262 and Asn-360. Residues 428–457 are disordered; that stretch reads QNHLPRGRERRQAAGRRTASLQSGPQGDRI. Residues Asn-579, Asn-635, and Asn-649 are each glycosylated (N-linked (GlcNAc...) asparagine; by host). 2 hydrophobic membrane proximal region regions span residues 694-748 and 724-744; these read IDTV…SFLS and ALGTVVMTAAAAVISTVSGIA. Residues 751-771 form a helical membrane-spanning segment; it reads FAALGIGIAVVVSIILGLLAF. Residues 772 to 883 lie on the Intravirion side of the membrane; the sequence is KYVMNLKSNP…PSWAEESEDE (112 aa). A disordered region spans residues 791-817; it reads PPAGTPPRPSRRYYKDEEEVEEDSDED. The segment covering 806-817 has biased composition (acidic residues); it reads DEEEVEEDSDED. The Internalization motif motif lies at 868 to 871; it reads YPLL.

This sequence belongs to the herpesviridae glycoprotein B family. In terms of assembly, homotrimer; disulfide-linked. Binds to heparan sulfate proteoglycans. Interacts with gH/gL heterodimer. Post-translationally, a proteolytic cleavage by host furin generates two subunits that remain linked by disulfide bonds.

It localises to the virion membrane. The protein resides in the host cell membrane. The protein localises to the host endosome membrane. It is found in the host Golgi apparatus membrane. Its function is as follows. Envelope glycoprotein that forms spikes at the surface of virion envelope. Essential for the initial attachment to heparan sulfate moieties of the host cell surface proteoglycans. Involved in fusion of viral and cellular membranes leading to virus entry into the host cell. Following initial binding to its host receptors, membrane fusion is mediated by the fusion machinery composed at least of gB and the heterodimer gH/gL. May be involved in the fusion between the virion envelope and the outer nuclear membrane during virion egress. The polypeptide is Envelope glycoprotein B (Gallus gallus (Chicken)).